The following is a 154-amino-acid chain: 3-hydroxyacyl-[acyl-carrier-protein] dehydratase FabZ (154 aa).

The active site involves His55.

This sequence belongs to the thioester dehydratase family. FabZ subfamily.

It is found in the cytoplasm. It carries out the reaction a (3R)-hydroxyacyl-[ACP] = a (2E)-enoyl-[ACP] + H2O. Its function is as follows. Involved in unsaturated fatty acids biosynthesis. Catalyzes the dehydration of short chain beta-hydroxyacyl-ACPs and long chain saturated and unsaturated beta-hydroxyacyl-ACPs. The chain is 3-hydroxyacyl-[acyl-carrier-protein] dehydratase FabZ from Oleidesulfovibrio alaskensis (strain ATCC BAA-1058 / DSM 17464 / G20) (Desulfovibrio alaskensis).